A 151-amino-acid polypeptide reads, in one-letter code: Small ribosomal subunit protein uS15z (151 aa).

It belongs to the universal ribosomal protein uS15 family.

The polypeptide is Small ribosomal subunit protein uS15z (RPS13A) (Arabidopsis thaliana (Mouse-ear cress)).